Reading from the N-terminus, the 353-residue chain is DNA-directed RNA polymerase subunit alpha (353 aa).

The alpha N-terminal domain (alpha-NTD) stretch occupies residues 1 to 226; the sequence is MLISQRPTLT…ELFGLARELN (226 aa). Residues 241-353 form an alpha C-terminal domain (alpha-CTD) region; that stretch reads ADHIASFGLP…TEDYAETEQL (113 aa). A disordered region spans residues 326–353; sequence ATGTWSDTDAGSFGDAEGTEDYAETEQL. The segment covering 342 to 353 has biased composition (acidic residues); it reads EGTEDYAETEQL.

Belongs to the RNA polymerase alpha chain family. In terms of assembly, homodimer. The RNAP catalytic core consists of 2 alpha, 1 beta, 1 beta' and 1 omega subunit. When a sigma factor is associated with the core the holoenzyme is formed, which can initiate transcription.

The catalysed reaction is RNA(n) + a ribonucleoside 5'-triphosphate = RNA(n+1) + diphosphate. In terms of biological role, DNA-dependent RNA polymerase catalyzes the transcription of DNA into RNA using the four ribonucleoside triphosphates as substrates. The sequence is that of DNA-directed RNA polymerase subunit alpha from Rhodococcus jostii (strain RHA1).